We begin with the raw amino-acid sequence, 558 residues long: Ribonuclease J (558 aa).

6 residues coordinate Zn(2+): His81, His83, Asp85, His86, His148, and Asp170. Residue 371–375 (HVSGH) coordinates substrate. His397 contacts Zn(2+).

This sequence belongs to the metallo-beta-lactamase superfamily. RNA-metabolizing metallo-beta-lactamase-like family. Bacterial RNase J subfamily. In terms of assembly, homodimer, may be a subunit of the RNA degradosome. It depends on Zn(2+) as a cofactor.

It is found in the cytoplasm. Its function is as follows. An RNase that has 5'-3' exonuclease and possibly endoonuclease activity. Involved in maturation of rRNA and in some organisms also mRNA maturation and/or decay. The polypeptide is Ribonuclease J (Mycobacterium tuberculosis (strain CDC 1551 / Oshkosh)).